Here is a 77-residue protein sequence, read N- to C-terminus: Large ribosomal subunit protein uL24c (77 aa).

This sequence belongs to the universal ribosomal protein uL24 family. As to quaternary structure, part of the 50S ribosomal subunit.

The protein localises to the plastid. Its subcellular location is the chloroplast. Its function is as follows. One of two assembly initiator proteins, it binds directly to the 5'-end of the 23S rRNA, where it nucleates assembly of the 50S subunit. This Trieres chinensis (Marine centric diatom) protein is Large ribosomal subunit protein uL24c (rpl24).